Here is a 156-residue protein sequence, read N- to C-terminus: Small ribosomal subunit protein uS7 (156 aa).

The protein belongs to the universal ribosomal protein uS7 family. In terms of assembly, part of the 30S ribosomal subunit. Contacts proteins S9 and S11.

One of the primary rRNA binding proteins, it binds directly to 16S rRNA where it nucleates assembly of the head domain of the 30S subunit. Is located at the subunit interface close to the decoding center, probably blocks exit of the E-site tRNA. The sequence is that of Small ribosomal subunit protein uS7 from Trichlorobacter lovleyi (strain ATCC BAA-1151 / DSM 17278 / SZ) (Geobacter lovleyi).